A 316-amino-acid chain; its full sequence is Ornithine carbamoyltransferase (316 aa).

Carbamoyl phosphate-binding positions include serine 57 to threonine 60, glutamine 84, arginine 108, and histidine 135 to glutamine 138. L-ornithine contacts are provided by residues asparagine 166, aspartate 230, and serine 234–methionine 235. Residues cysteine 269 to leucine 270 and arginine 297 contribute to the carbamoyl phosphate site.

It belongs to the aspartate/ornithine carbamoyltransferase superfamily. OTCase family.

The protein resides in the cytoplasm. It carries out the reaction carbamoyl phosphate + L-ornithine = L-citrulline + phosphate + H(+). It participates in amino-acid biosynthesis; L-arginine biosynthesis; L-arginine from L-ornithine and carbamoyl phosphate: step 1/3. Functionally, reversibly catalyzes the transfer of the carbamoyl group from carbamoyl phosphate (CP) to the N(epsilon) atom of ornithine (ORN) to produce L-citrulline. The protein is Ornithine carbamoyltransferase (argF) of Bacillus cereus (strain ATCC 14579 / DSM 31 / CCUG 7414 / JCM 2152 / NBRC 15305 / NCIMB 9373 / NCTC 2599 / NRRL B-3711).